A 348-amino-acid polypeptide reads, in one-letter code: D-erythrose-4-phosphate dehydrogenase (348 aa).

Residue 12–13 (RI) participates in NAD(+) binding. Substrate is bound by residues 154–156 (SCT), Arg-200, 213–214 (TR), and Arg-236. Cys-155 (nucleophile) is an active-site residue. Position 318 (Asn-318) interacts with NAD(+).

Belongs to the glyceraldehyde-3-phosphate dehydrogenase family. Epd subfamily. As to quaternary structure, homotetramer.

It is found in the cytoplasm. The enzyme catalyses D-erythrose 4-phosphate + NAD(+) + H2O = 4-phospho-D-erythronate + NADH + 2 H(+). It participates in cofactor biosynthesis; pyridoxine 5'-phosphate biosynthesis; pyridoxine 5'-phosphate from D-erythrose 4-phosphate: step 1/5. In terms of biological role, catalyzes the NAD-dependent conversion of D-erythrose 4-phosphate to 4-phosphoerythronate. The polypeptide is D-erythrose-4-phosphate dehydrogenase (Erwinia tasmaniensis (strain DSM 17950 / CFBP 7177 / CIP 109463 / NCPPB 4357 / Et1/99)).